Here is a 351-residue protein sequence, read N- to C-terminus: Phosphoribosylformylglycinamidine cyclo-ligase (351 aa).

This sequence belongs to the AIR synthase family.

Its subcellular location is the cytoplasm. The enzyme catalyses 2-formamido-N(1)-(5-O-phospho-beta-D-ribosyl)acetamidine + ATP = 5-amino-1-(5-phospho-beta-D-ribosyl)imidazole + ADP + phosphate + H(+). The protein operates within purine metabolism; IMP biosynthesis via de novo pathway; 5-amino-1-(5-phospho-D-ribosyl)imidazole from N(2)-formyl-N(1)-(5-phospho-D-ribosyl)glycinamide: step 2/2. This Burkholderia ambifaria (strain ATCC BAA-244 / DSM 16087 / CCUG 44356 / LMG 19182 / AMMD) (Burkholderia cepacia (strain AMMD)) protein is Phosphoribosylformylglycinamidine cyclo-ligase.